A 314-amino-acid polypeptide reads, in one-letter code: Ferrochelatase (314 aa).

The Fe cation site is built by His-184 and Glu-259.

Belongs to the ferrochelatase family.

Its subcellular location is the cytoplasm. The catalysed reaction is heme b + 2 H(+) = protoporphyrin IX + Fe(2+). It functions in the pathway porphyrin-containing compound metabolism; protoheme biosynthesis; protoheme from protoporphyrin-IX: step 1/1. Its function is as follows. Catalyzes the ferrous insertion into protoporphyrin IX. The sequence is that of Ferrochelatase from Chlamydia trachomatis serovar D (strain ATCC VR-885 / DSM 19411 / UW-3/Cx).